The following is a 683-amino-acid chain: Protein kinase C eta type (683 aa).

The C2 domain occupies 1–118 (MSSGTMKFNG…LRTTGASDTF (118 aa)). Phosphoserine; by autocatalysis is present on residues S28 and S32. Phorbol-ester/DAG-type zinc fingers lie at residues 171–222 (GHKF…VTAC) and 245–295 (PHKF…APNC). A Phosphoserine modification is found at S317. Residues 320–342 (SKLVSRSTLRRQGKESSKEGNGI) form a disordered region. Residues 355–614 (FEFIRVLGKG…EHAILRHPFF (260 aa)) enclose the Protein kinase domain. ATP is bound by residues 361-369 (LGKGSFGKV) and K384. The Proton acceptor role is filled by D479. T513 bears the Phosphothreonine; by PDPK1 mark. The region spanning 615–683 (KEIDWAQLNH…FSYVSPELQP (69 aa)) is the AGC-kinase C-terminal domain. T656 carries the phosphothreonine modification. Residue S675 is modified to Phosphoserine.

It belongs to the protein kinase superfamily. AGC Ser/Thr protein kinase family. PKC subfamily. In terms of assembly, interacts with FYN. Interacts with RALA. Interacts with DGKQ. Interacts with PRKCH upstream open reading frame 2; the interaction leads to inhibition of kinase activity. As to expression, most abundant in lung, less in heart and skin.

It localises to the cytoplasm. It carries out the reaction L-seryl-[protein] + ATP = O-phospho-L-seryl-[protein] + ADP + H(+). It catalyses the reaction L-threonyl-[protein] + ATP = O-phospho-L-threonyl-[protein] + ADP + H(+). With respect to regulation, novel PKCs (PRKCD, PRKCE, PRKCH and PRKCQ) are calcium-insensitive, but activated by diacylglycerol (DAG) and phosphatidylserine. Three specific sites; Thr-513 (activation loop of the kinase domain), Thr-656 (turn motif) and Ser-675 (hydrophobic region), need to be phosphorylated for its full activation. Inhibited by PRKCH upstream open reading frame 2. Its function is as follows. Calcium-independent, phospholipid- and diacylglycerol (DAG)-dependent serine/threonine-protein kinase that is involved in the regulation of cell differentiation in keratinocytes and pre-B cell receptor, mediates regulation of epithelial tight junction integrity and foam cell formation, and is required for glioblastoma proliferation and apoptosis prevention in MCF-7 cells. In keratinocytes, binds and activates the tyrosine kinase FYN, which in turn blocks epidermal growth factor receptor (EGFR) signaling and leads to keratinocyte growth arrest and differentiation. Associates with the cyclin CCNE1-CDK2-CDKN1B complex and inhibits CDK2 kinase activity, leading to RB1 dephosphorylation and thereby G1 arrest in keratinocytes. In association with RALA activates actin depolymerization, which is necessary for keratinocyte differentiation. In the pre-B cell receptor signaling, functions downstream of BLNK by up-regulating IRF4, which in turn activates L chain gene rearrangement. Regulates epithelial tight junctions (TJs) by phosphorylating occludin (OCLN) on threonine residues, which is necessary for the assembly and maintenance of TJs. In association with PLD2 and via TLR4 signaling, is involved in lipopolysaccharide (LPS)-induced RGS2 down-regulation and foam cell formation. Upon PMA stimulation, mediates glioblastoma cell proliferation by activating the mTOR pathway, the PI3K/AKT pathway and the ERK1-dependent phosphorylation of ELK1. Involved in the protection of glioblastoma cells from irradiation-induced apoptosis by preventing caspase-9 activation. In camptothecin-treated MCF-7 cells, regulates NF-kappa-B upstream signaling by activating IKBKB, and confers protection against DNA damage-induced apoptosis. Promotes oncogenic functions of ATF2 in the nucleus while blocking its apoptotic function at mitochondria. Phosphorylates ATF2 which promotes its nuclear retention and transcriptional activity and negatively regulates its mitochondrial localization. This Homo sapiens (Human) protein is Protein kinase C eta type (PRKCH).